The primary structure comprises 283 residues: ATP phosphoribosyltransferase (283 aa).

It belongs to the ATP phosphoribosyltransferase family. Long subfamily. Equilibrium between an active dimeric form, an inactive hexameric form and higher aggregates. Interconversion between the various forms is largely reversible and is influenced by the natural substrates and inhibitors of the enzyme. Mg(2+) serves as cofactor.

The protein resides in the cytoplasm. The enzyme catalyses 1-(5-phospho-beta-D-ribosyl)-ATP + diphosphate = 5-phospho-alpha-D-ribose 1-diphosphate + ATP. The protein operates within amino-acid biosynthesis; L-histidine biosynthesis; L-histidine from 5-phospho-alpha-D-ribose 1-diphosphate: step 1/9. Its activity is regulated as follows. Feedback inhibited by histidine. Functionally, catalyzes the condensation of ATP and 5-phosphoribose 1-diphosphate to form N'-(5'-phosphoribosyl)-ATP (PR-ATP). Has a crucial role in the pathway because the rate of histidine biosynthesis seems to be controlled primarily by regulation of HisG enzymatic activity. This is ATP phosphoribosyltransferase from Mycobacterium sp. (strain JLS).